Here is a 138-residue protein sequence, read N- to C-terminus: Thyrotropin subunit beta (138 aa).

The signal sequence occupies residues 1 to 20 (MTAIFLMSMVFGLACGQTMS). 6 disulfides stabilise this stretch: C22–C72, C36–C87, C39–C125, C47–C103, C51–C105, and C108–C115. The N-linked (GlcNAc...) asparagine glycan is linked to N43. The propeptide occupies 133–138 (VVEFSI).

Belongs to the glycoprotein hormones subunit beta family. As to quaternary structure, heterodimer of a common alpha chain and a unique beta chain which confers biological specificity to thyrotropin, lutropin, follitropin and gonadotropin.

Its subcellular location is the secreted. Its function is as follows. Indispensable for the control of thyroid structure and metabolism. This chain is Thyrotropin subunit beta (TSHB), found in Equus caballus (Horse).